Here is a 134-residue protein sequence, read N- to C-terminus: Histone H3-like centromeric protein A (134 aa).

The segment covering 1-14 has biased composition (basic residues); that stretch reads MGPRRKPQTPRRRP. Residues 1–34 form a disordered region; it reads MGPRRKPQTPRRRPSSPAPGPSRQSSSVGSQTLR. Glycine 2 is subject to N,N,N-trimethylglycine. Residues serine 16 and serine 22 each carry the phosphoserine modification. Residues 34-48 are important for flexibility of DNA ends that protrude from nucleosomes; that stretch reads RRRQKFMWLKEIKTL. The tract at residues 35-134 is H3-like; that stretch reads RRQKFMWLKE…RIRGFEGGLP (100 aa). At serine 62 the chain carries Phosphoserine. The tract at residues 69–110 is CATD; the sequence is CEKFSRGVDFWWQAQALLALQEAAEAFLIHLFEDAYLLSLHA.

The protein belongs to the histone H3 family. In terms of assembly, component of centromeric nucleosomes, where DNA is wrapped around a histone octamer core. The octamer contains two molecules each of H2A, H2B, CENPA and H4 assembled in one CENPA-H4 heterotetramer and two H2A-H2B heterodimers. CENPA modulates the DNA-binding characteristics of nucleosomes so that protruding DNA ends have higher flexibility than in nucleosomes containing conventional histone H3. Inhibits binding of histone H1 to nucleosomes, since histone H1 binds preferentially to rigid DNA linkers that protrude from nucleosomes. Nucleosomes containing CENPA also contain histone H2A variants such as MACROH2A and H2A.Z/H2AZ1. The CENPA-H4 heterotetramer is more compact and structurally more rigid than corresponding H3-H4 heterotetramers. Can assemble into nucleosomes that contain both CENPA and histone H3.3; these nucleosomes interact with a single CENPC chain. Heterotrimer composed of HJURP, CENPA and histone H4, where HJURP interacts with the dimer formed by CENPA and histone H4 and prevents tetramerization of CENPA and H4. Component of the CENPA-NAC complex, at least composed of CENPA, CENPC, CENPH, CENPM, CENPN, CENPT and CENPU. Interacts (via CATD domain) with HJURP; the interaction is direct and is required for its localization to centromeres. Interacts with CENPC, CENPN and CENPT; interaction is direct. Part of a centromere complex consisting of CENPA, CENPT and CENPW. Identified in centromere complexes containing histones H2A, H2B and H4, and at least CENPA, CENPB, CENPC, CENPT, CENPN, HJURP, SUPT16H, SSRP1 and RSF1. Can self-associate. The CENPA-H4 heterotetramer can bind DNA by itself (in vitro). Interacts with CDK1, PPP1CA and RBBP7. In terms of processing, poly-ADP-ribosylated by PARP1. Post-translationally, trimethylated by NTMT1 at the N-terminal glycine after cleavage of Met-1. Methylation is low before incorporation into nucleosomes and increases with cell cycle progression, with the highest levels in mitotic nucleosomes. Phosphorylated by CDK1 at Ser-62 during early mitosis; this abolishes association with chromatin and centromeres, prevents interaction with HJURP and thereby prevents premature assembly of CENPA into centromeres. Dephosphorylated at Ser-62 by PPP1CA during late mitosis.

It is found in the nucleus. The protein resides in the chromosome. It localises to the centromere. Functionally, histone H3-like nucleosomal protein that is specifically found in centromeric nucleosomes. Replaces conventional H3 in the nucleosome core of centromeric chromatin that serves as an assembly site for the inner kinetochore. The presence of CENPA subtly modifies the nucleosome structure and the way DNA is wrapped around the nucleosome and gives rise to protruding DNA ends that are less well-ordered and rigid compared to nucleosomes containing histone H3. May serve as an epigenetic mark that propagates centromere identity through replication and cell division. Required for recruitment and assembly of kinetochore proteins, and as a consequence required for progress through mitosis, chromosome segregation and cytokinesis. In Mus musculus (Mouse), this protein is Histone H3-like centromeric protein A (Cenpa).